A 390-amino-acid chain; its full sequence is uncharacterized protein (390 aa).

A run of 12 helical transmembrane segments spans residues 4 to 24 (IWLF…LSPL), 40 to 60 (GWMV…AGPI), 68 to 88 (TVML…GIAP), 98 to 118 (FAAG…IPVI), 130 to 150 (IATA…GFLA), 159 to 179 (FVLS…MPGI), 205 to 225 (VILL…SFLG), 236 to 256 (VSQI…GSLI), 273 to 293 (GMLL…LFLV), 295 to 315 (AGFF…MGVF), 329 to 349 (LSNA…GFLY), and 356 to 376 (GAVT…YQTI).

Belongs to the major facilitator superfamily.

Its subcellular location is the cell membrane. This is an uncharacterized protein from Bacillus subtilis (strain 168).